The chain runs to 275 residues: Bis(5'-nucleosyl)-tetraphosphatase, symmetrical (275 aa).

This sequence belongs to the Ap4A hydrolase family.

It carries out the reaction P(1),P(4)-bis(5'-adenosyl) tetraphosphate + H2O = 2 ADP + 2 H(+). Its function is as follows. Hydrolyzes diadenosine 5',5'''-P1,P4-tetraphosphate to yield ADP. The polypeptide is Bis(5'-nucleosyl)-tetraphosphatase, symmetrical (Hamiltonella defensa subsp. Acyrthosiphon pisum (strain 5AT)).